A 427-amino-acid polypeptide reads, in one-letter code: Enolase (427 aa).

Q164 contributes to the (2R)-2-phosphoglycerate binding site. E206 acts as the Proton donor in catalysis. 3 residues coordinate Mg(2+): D243, E284, and D311. 4 residues coordinate (2R)-2-phosphoglycerate: K336, R365, S366, and K387. Residue K336 is the Proton acceptor of the active site.

It belongs to the enolase family. It depends on Mg(2+) as a cofactor.

The protein resides in the cytoplasm. Its subcellular location is the secreted. The protein localises to the cell surface. The enzyme catalyses (2R)-2-phosphoglycerate = phosphoenolpyruvate + H2O. The protein operates within carbohydrate degradation; glycolysis; pyruvate from D-glyceraldehyde 3-phosphate: step 4/5. In terms of biological role, catalyzes the reversible conversion of 2-phosphoglycerate (2-PG) into phosphoenolpyruvate (PEP). It is essential for the degradation of carbohydrates via glycolysis. This is Enolase from Synechococcus sp. (strain JA-2-3B'a(2-13)) (Cyanobacteria bacterium Yellowstone B-Prime).